We begin with the raw amino-acid sequence, 153 residues long: Cytochrome c-type biogenesis protein CcmE (153 aa).

Residues 1–8 (MATRRGRR) are Cytoplasmic-facing. Residues 9 to 29 (ALLIAGGVGLLALAAALVLNA) traverse the membrane as a helical; Signal-anchor for type II membrane protein segment. Residues 30-153 (LRSNLVFFFS…PSATLQTEAR (124 aa)) lie on the Periplasmic side of the membrane. Heme-binding residues include His124 and Tyr128.

The protein belongs to the CcmE/CycJ family.

It is found in the cell inner membrane. In terms of biological role, heme chaperone required for the biogenesis of c-type cytochromes. Transiently binds heme delivered by CcmC and transfers the heme to apo-cytochromes in a process facilitated by CcmF and CcmH. In Bordetella bronchiseptica (strain ATCC BAA-588 / NCTC 13252 / RB50) (Alcaligenes bronchisepticus), this protein is Cytochrome c-type biogenesis protein CcmE.